The chain runs to 506 residues: COP9 signalosome complex subunit 2 (506 aa).

The PCI domain occupies 252-420; the sequence is SEENWEEAQS…GTVVVESASD (169 aa). Over residues 482–491 the composition is skewed to basic residues; that stretch reads SGHRFRRGGK. Residues 482–506 form a disordered region; it reads SGHRFRRGGKGSKAGGGLGMKTGLF. Positions 492-506 are enriched in gly residues; it reads GSKAGGGLGMKTGLF.

This sequence belongs to the CSN2 family. Component of the COP9 signalosome (CSN) complex.

The protein localises to the cytoplasm. The protein resides in the nucleus. Functionally, component of the COP9 signalosome (CSN) complex that acts as an regulator of the ubiquitin (Ubl) conjugation pathway by mediating the deneddylation of the cullin subunit of SCF-type E3 ubiquitin-protein ligase complexes. The CSN complex seems to link protein degradation to sexual development. Required for fruit body formation. This Emericella nidulans (strain FGSC A4 / ATCC 38163 / CBS 112.46 / NRRL 194 / M139) (Aspergillus nidulans) protein is COP9 signalosome complex subunit 2 (csnB).